The following is a 432-amino-acid chain: Peptidyl-prolyl cis-trans isomerase cyp6 (432 aa).

The PPIase cyclophilin-type domain occupies 1–168 (MSVLIETTVG…RDIRIKHTII (168 aa)). At S206 the chain carries Phosphoserine. An RRM domain is found at 244–322 (NVLFVCKLNP…SRIHVDFSQS (79 aa)). The disordered stretch occupies residues 330 to 432 (YNSNRDRKRS…DRRYRDDRYR (103 aa)). Composition is skewed to basic and acidic residues over residues 341–366 (SRSD…DDYR), 373–395 (DHRD…DDRS), and 406–432 (NCDD…DRYR).

The protein belongs to the cyclophilin-type PPIase family. PPIL4 subfamily.

The protein resides in the nucleus. The catalysed reaction is [protein]-peptidylproline (omega=180) = [protein]-peptidylproline (omega=0). In terms of biological role, PPIases accelerate the folding of proteins. It catalyzes the cis-trans isomerization of proline imidic peptide bonds in oligopeptides. The chain is Peptidyl-prolyl cis-trans isomerase cyp6 (cyp6) from Schizosaccharomyces pombe (strain 972 / ATCC 24843) (Fission yeast).